The following is a 196-amino-acid chain: Imidazoleglycerol-phosphate dehydratase (196 aa).

The protein belongs to the imidazoleglycerol-phosphate dehydratase family.

Its subcellular location is the cytoplasm. It catalyses the reaction D-erythro-1-(imidazol-4-yl)glycerol 3-phosphate = 3-(imidazol-4-yl)-2-oxopropyl phosphate + H2O. The protein operates within amino-acid biosynthesis; L-histidine biosynthesis; L-histidine from 5-phospho-alpha-D-ribose 1-diphosphate: step 6/9. The polypeptide is Imidazoleglycerol-phosphate dehydratase (Clostridium botulinum (strain Kyoto / Type A2)).